A 615-amino-acid polypeptide reads, in one-letter code: MPAYRSRTTTHGRNMAGARGLWRATGMKDSDFGKPIIAVVNSFTQFVPGHVHLKDLGQMVAREIEAAGGVAKEFNTIAVDDGIAMGHDGMLYSLPSRDLIADSVEYMVNAHCADAMVCISNCDKITPGMLMAAMRINIPVVFVSGGPMEAGKVILKGKEHALDLVDAMVAAADESFTDEEVTAIERSACPTCGSCSGMFTANSMNCLTEALGLSLPGNGSTLATHADRQRLFLEAGRLVVDLCKRYYEQDDESVLPRSIATFEAFENAMSLDIAMGGSTNTVLHLLAAAHEAGVNFTMSDIDHLSRKVPCLSKVAPAKSDVHMEDVHRAGGIYAILGELDRAGLLHTHLPTVHSRTLGDALNQWDVKRTNSPTVQEFFRAAPGGVPTQVAFSQDRRWKELDLDRETGVIRSAEHAFSKDGGLAVLFGNIAREGCIVKTAGVDDSILKFTGPAKVYESQDAAVTAILTGQVTSGDVVVIRYEGPKGGPGMQEMLYPTSYLKSKGLGAACALLTDGRFSGGTSGLSIGHVSPEAAEGGEIGLVENGDVIEIDIPNRTIHLAVADDVLAQRRAEQEAKGWKPVKERPRKVSTALRAYAAMTTSAARGAVRDLSQLKID.

Asp81 contributes to the Mg(2+) binding site. Cys122 is a binding site for [2Fe-2S] cluster. Asp123 and Lys124 together coordinate Mg(2+). Lys124 carries the post-translational modification N6-carboxylysine. Cys195 provides a ligand contact to [2Fe-2S] cluster. Mg(2+) is bound at residue Glu491. Ser517 functions as the Proton acceptor in the catalytic mechanism.

It belongs to the IlvD/Edd family. Homodimer. [2Fe-2S] cluster is required as a cofactor. Mg(2+) serves as cofactor.

It catalyses the reaction (2R)-2,3-dihydroxy-3-methylbutanoate = 3-methyl-2-oxobutanoate + H2O. It carries out the reaction (2R,3R)-2,3-dihydroxy-3-methylpentanoate = (S)-3-methyl-2-oxopentanoate + H2O. Its pathway is amino-acid biosynthesis; L-isoleucine biosynthesis; L-isoleucine from 2-oxobutanoate: step 3/4. The protein operates within amino-acid biosynthesis; L-valine biosynthesis; L-valine from pyruvate: step 3/4. In terms of biological role, functions in the biosynthesis of branched-chain amino acids. Catalyzes the dehydration of (2R,3R)-2,3-dihydroxy-3-methylpentanoate (2,3-dihydroxy-3-methylvalerate) into 2-oxo-3-methylpentanoate (2-oxo-3-methylvalerate) and of (2R)-2,3-dihydroxy-3-methylbutanoate (2,3-dihydroxyisovalerate) into 2-oxo-3-methylbutanoate (2-oxoisovalerate), the penultimate precursor to L-isoleucine and L-valine, respectively. This Novosphingobium aromaticivorans (strain ATCC 700278 / DSM 12444 / CCUG 56034 / CIP 105152 / NBRC 16084 / F199) protein is Dihydroxy-acid dehydratase.